The following is an 884-amino-acid chain: MTSLNDIRSTFLDYFGRQGHAVVPSSPLVPRNDPTLMFVNSGMVQFKNLFTGVEKRDYVRATSSQKCVRAGGKHNDLDNVGYTARHHTFFEMLGNFSFGDYFKEDAIRYAWELITKDFGLDKARLYVTVYHTDDEAFEIWKKVGVPEDRIIRIATSDNFWQMGPTGPCGPCTEIFYDHGEHIWGGPPGSAEEDGDRFIEIWNIVFMQNEQFADGTMVPLDMQSIDTGMGLERIGALLQGSHDNYDTDTMRALMEASAHASSTDLDGDQNVHHRVIADHLRSTSFLIADGVMPSNDGRGYVLRRIMRRAMRHAHLLGAKDPLMYRLVPALVSQMGQAYSELGQAQALITETLKLEEERFRQTLDRGLKLLDDEVAKLPEDGNLPGAAAFKLYDTYGFPLDLTQDALREQGRTVDTDGFDAAMAEQKAKARAAWSGSGDAADATIWFDIAEKNGVTEFLGYDTEVAEGQVLALVVDGARVDKVASNQDVIFVTNQTPFYAESGGQVGDSGTIRTETGVLHVTETRKVAGVFLHVGQVTEGTIKVGQGASLSVDHERRRYICANHSATHLLNEALRWAIGDSVVQRGSLNSRDRLRFDFSHNKPMTADELAQVEAEVNDLITRNTAVETRVMTPDDARALGAQALFGEKYGDEVRVVSMGHHAGSGKGLDKDTYSIELCGGTHVKRTGDIGPFVILSESASAAGVRRIEALTNQTASFYLSEQNERMGQLAAELNTQAADVLDRVKALKDDRKKLENEVAQLRRELAMAGGTSAPEAASVNGVNFHAQALSGVTGKDLAGIVDEHKARLGSGAVLLIADAGGKAAVAAGVTEDLTDRLSAVDLVRAAVAELGGKGGGGRPDFAQGGGKDAANAEAAIAAAKTVIEGV.

Zn(2+) contacts are provided by histidine 562, histidine 566, cysteine 676, and histidine 680.

It belongs to the class-II aminoacyl-tRNA synthetase family. The cofactor is Zn(2+).

It is found in the cytoplasm. It catalyses the reaction tRNA(Ala) + L-alanine + ATP = L-alanyl-tRNA(Ala) + AMP + diphosphate. Catalyzes the attachment of alanine to tRNA(Ala) in a two-step reaction: alanine is first activated by ATP to form Ala-AMP and then transferred to the acceptor end of tRNA(Ala). Also edits incorrectly charged Ser-tRNA(Ala) and Gly-tRNA(Ala) via its editing domain. This is Alanine--tRNA ligase from Jannaschia sp. (strain CCS1).